A 131-amino-acid polypeptide reads, in one-letter code: MKYFVVALALVAAFACIAESKPAESEHELAEVEEENELADLEDAVWLEHLADLSDLEEARGFFGNTWKKIKGKADKIMLKKAVKIMVKKEGISKEEAQAKVDAMSKKQIRLYLLKYYGKKLFKKRPKNCDQ.

Residues 1–20 (MKYFVVALALVAAFACIAES) form the signal peptide. A propeptide spanning residues 21–60 (KPAESEHELAEVEEENELADLEDAVWLEHLADLSDLEEAR) is cleaved from the precursor.

Belongs to the cationic peptide 06 (cytoinsectotoxin) family. As to expression, expressed by the venom gland.

The protein resides in the secreted. Functionally, insecticidal, cytolytic and antimicrobial peptide. Forms voltage-dependent, ion-permeable channels in membranes. At high concentration causes cell membrane lysis. This Lachesana tarabaevi (Spider) protein is M-zodatoxin-Lt8o (cit 1-14).